Here is a 327-residue protein sequence, read N- to C-terminus: uncharacterized protein (327 aa).

The N-terminal stretch at 1 to 24 (MAMACLCLANISWATVCANSTGVA) is a signal peptide.

The protein belongs to the fimbrial protein family.

The protein localises to the fimbrium. Functionally, part of the sfmACDHF fimbrial operon. Could contribute to adhesion to various surfaces in specific environmental niches. Increases adhesion to eukaryotic T24 bladder epithelial cells in the absence of fim genes. This is an uncharacterized protein from Escherichia coli (strain K12).